The following is a 395-amino-acid chain: LIM/homeobox protein Lhx3 (395 aa).

LIM zinc-binding domains lie at 28 to 78 and 87 to 141; these read CAGC…CKDD and CAAC…CKAD. Residues 154–213 constitute a DNA-binding region (homeobox); that stretch reads AKRPRTTITAKQLETLKNAYNNSPKPARHVREQLSSETGLDMRVVQVWFQNRRAKEKRLK. Disordered stretches follow at residues 208–304 and 363–383; these read KEKR…QDQY and GPSSDLSTGSSGGYPDFPVSP. The span at 257-278 shows a compositional bias: polar residues; the sequence is DEPSMSEMNHSNGIYNSLNDSS.

Interacts with ldb1 and with the N-terminus of rnf12. In dorsal regions at neural tube and tailbud stages and in adults predominantly in the pituitary gland and weakly in the eye and brain.

The protein resides in the nucleus. Its function is as follows. Transcription factor. May be involved in the specification and maintenance of differentiation of distinct neuronal and neuroendocrine tissues. Early marker for the pituitary and pineal lineages, it may be involved in specifying these lineages. The sequence is that of LIM/homeobox protein Lhx3 (lhx3) from Xenopus laevis (African clawed frog).